The chain runs to 753 residues: Probable tubulin--tyrosine ligase PBY1 (753 aa).

A TTL domain is found at 343–734 (MEYIYKPLTH…PIFNENRNKT (392 aa)).

The protein belongs to the tubulin--tyrosine ligase family. It depends on Mg(2+) as a cofactor. K(+) is required as a cofactor.

The protein localises to the cytoplasm. It is found in the P-body. It carries out the reaction C-terminal L-alpha-aminoacyl-L-glutamyl-L-glutamyl-[tubulin] + L-tyrosine + ATP = C-terminal L-alpha-aminoacyl-L-glutamyl-L-glutamyl-L-tyrosyl-[tubulin] + ADP + phosphate + H(+). Its function is as follows. Probable P-body-associated tubulin--tyrosine ligase. In Saccharomyces cerevisiae (strain ATCC 204508 / S288c) (Baker's yeast), this protein is Probable tubulin--tyrosine ligase PBY1 (PBY1).